A 91-amino-acid chain; its full sequence is DNA-directed RNA polymerase subunit Rpo5 (91 aa).

Belongs to the archaeal Rpo5/eukaryotic RPB5 RNA polymerase subunit family. As to quaternary structure, part of the RNA polymerase complex.

Its subcellular location is the cytoplasm. It catalyses the reaction RNA(n) + a ribonucleoside 5'-triphosphate = RNA(n+1) + diphosphate. Functionally, DNA-dependent RNA polymerase (RNAP) catalyzes the transcription of DNA into RNA using the four ribonucleoside triphosphates as substrates. The sequence is that of DNA-directed RNA polymerase subunit Rpo5 from Staphylothermus marinus (strain ATCC 43588 / DSM 3639 / JCM 9404 / F1).